The sequence spans 138 residues: Basic phospholipase A2 Mtx-b (138 aa).

An N-terminal signal peptide occupies residues 1-16 (MRALWIVAVLLVGVEG). Cystine bridges form between Cys42/Cys131, Cys44/Cys60, Cys59/Cys111, Cys65/Cys138, Cys66/Cys104, Cys73/Cys97, and Cys91/Cys102. Residues Tyr43, Gly45, and Gly47 each contribute to the Ca(2+) site. Residue His63 is part of the active site. Asp64 contacts Ca(2+). Asp105 is a catalytic residue.

As to quaternary structure, heterodimer of an acidic subunit and a basic chain. The acidic subunit is non-toxic, without enzymatic activity and comprises 3 peptides that are cross-linked by 7 disulfide bridges. The basic subunit is toxic, has phospholipase A2 activity and is composed of a single chain. It depends on Ca(2+) as a cofactor. As to expression, expressed by the venom gland.

It is found in the secreted. The catalysed reaction is a 1,2-diacyl-sn-glycero-3-phosphocholine + H2O = a 1-acyl-sn-glycero-3-phosphocholine + a fatty acid + H(+). Snake venom phospholipase A2 (PLA2) that inhibits neuromuscular transmission by blocking acetylcholine release from the nerve termini. PLA2 catalyzes the calcium-dependent hydrolysis of the 2-acyl groups in 3-sn-phosphoglycerides. This Crotalus scutulatus scutulatus (Mojave rattlesnake) protein is Basic phospholipase A2 Mtx-b.